Reading from the N-terminus, the 274-residue chain is Orotidine 5'-phosphate decarboxylase (274 aa).

Lys-95 acts as the Proton donor in catalysis.

This sequence belongs to the OMP decarboxylase family. Type 2 subfamily.

It carries out the reaction orotidine 5'-phosphate + H(+) = UMP + CO2. It participates in pyrimidine metabolism; UMP biosynthesis via de novo pathway; UMP from orotate: step 2/2. The polypeptide is Orotidine 5'-phosphate decarboxylase (pyrF) (Mycobacterium bovis (strain ATCC BAA-935 / AF2122/97)).